The sequence spans 194 residues: Imidazoleglycerol-phosphate dehydratase (194 aa).

Belongs to the imidazoleglycerol-phosphate dehydratase family.

It localises to the cytoplasm. It carries out the reaction D-erythro-1-(imidazol-4-yl)glycerol 3-phosphate = 3-(imidazol-4-yl)-2-oxopropyl phosphate + H2O. It participates in amino-acid biosynthesis; L-histidine biosynthesis; L-histidine from 5-phospho-alpha-D-ribose 1-diphosphate: step 6/9. The protein is Imidazoleglycerol-phosphate dehydratase of Listeria welshimeri serovar 6b (strain ATCC 35897 / DSM 20650 / CCUG 15529 / CIP 8149 / NCTC 11857 / SLCC 5334 / V8).